A 556-amino-acid chain; its full sequence is 2-succinyl-5-enolpyruvyl-6-hydroxy-3-cyclohexene-1-carboxylate synthase (556 aa).

Belongs to the TPP enzyme family. MenD subfamily. Homodimer. Mg(2+) serves as cofactor. It depends on Mn(2+) as a cofactor. The cofactor is thiamine diphosphate.

The catalysed reaction is isochorismate + 2-oxoglutarate + H(+) = 5-enolpyruvoyl-6-hydroxy-2-succinyl-cyclohex-3-ene-1-carboxylate + CO2. The protein operates within quinol/quinone metabolism; 1,4-dihydroxy-2-naphthoate biosynthesis; 1,4-dihydroxy-2-naphthoate from chorismate: step 2/7. It functions in the pathway quinol/quinone metabolism; menaquinone biosynthesis. In terms of biological role, catalyzes the thiamine diphosphate-dependent decarboxylation of 2-oxoglutarate and the subsequent addition of the resulting succinic semialdehyde-thiamine pyrophosphate anion to isochorismate to yield 2-succinyl-5-enolpyruvyl-6-hydroxy-3-cyclohexene-1-carboxylate (SEPHCHC). The chain is 2-succinyl-5-enolpyruvyl-6-hydroxy-3-cyclohexene-1-carboxylate synthase from Shigella flexneri serotype 5b (strain 8401).